The primary structure comprises 156 residues: tRNA (cytidine(34)-2'-O)-methyltransferase (156 aa).

Residues Gly102, Leu124, and Ser132 each coordinate S-adenosyl-L-methionine.

The protein belongs to the class IV-like SAM-binding methyltransferase superfamily. RNA methyltransferase TrmH family. TrmL subfamily. In terms of assembly, homodimer.

Its subcellular location is the cytoplasm. It carries out the reaction cytidine(34) in tRNA + S-adenosyl-L-methionine = 2'-O-methylcytidine(34) in tRNA + S-adenosyl-L-homocysteine + H(+). The catalysed reaction is 5-carboxymethylaminomethyluridine(34) in tRNA(Leu) + S-adenosyl-L-methionine = 5-carboxymethylaminomethyl-2'-O-methyluridine(34) in tRNA(Leu) + S-adenosyl-L-homocysteine + H(+). Functionally, methylates the ribose at the nucleotide 34 wobble position in the two leucyl isoacceptors tRNA(Leu)(CmAA) and tRNA(Leu)(cmnm5UmAA). Catalyzes the methyl transfer from S-adenosyl-L-methionine to the 2'-OH of the wobble nucleotide. The chain is tRNA (cytidine(34)-2'-O)-methyltransferase from Burkholderia pseudomallei (strain 1106a).